The sequence spans 311 residues: Linearmycin resistance ATP-binding protein LnrL (311 aa).

An ABC transporter domain is found at 2 to 232 (LQAENIKKAY…LGGDTIIQLT (231 aa)). 34–41 (GPNGAGKS) lines the ATP pocket.

It belongs to the ABC transporter superfamily. In terms of assembly, the complex is composed of two ATP-binding proteins (LnrL) and two transmembrane proteins (LnrM and LnrN).

Its function is as follows. Required for resistance to linearmycins, a family of antibiotic-specialized metabolites produced by some streptomycetes. Part of the ABC transporter complex LnrLMN that probably facilitates linearmycin removal from the membrane. Responsible for energy coupling to the transport system. Also mediates KinC-dependent biofilm morphology. This is Linearmycin resistance ATP-binding protein LnrL from Bacillus subtilis (strain 168).